A 1382-amino-acid polypeptide reads, in one-letter code: DNA-directed RNA polymerase subunit beta (1382 aa).

This sequence belongs to the RNA polymerase beta chain family. As to quaternary structure, the RNAP catalytic core consists of 2 alpha, 1 beta, 1 beta' and 1 omega subunit. When a sigma factor is associated with the core the holoenzyme is formed, which can initiate transcription.

The enzyme catalyses RNA(n) + a ribonucleoside 5'-triphosphate = RNA(n+1) + diphosphate. DNA-dependent RNA polymerase catalyzes the transcription of DNA into RNA using the four ribonucleoside triphosphates as substrates. This Aliarcobacter butzleri (strain RM4018) (Arcobacter butzleri) protein is DNA-directed RNA polymerase subunit beta.